Reading from the N-terminus, the 440-residue chain is Deoxyguanosinetriphosphate triphosphohydrolase-like protein (440 aa).

The 194-residue stretch at 62–255 (RLTHSLEAAQ…MELADDIAYG (194 aa)) folds into the HD domain.

Belongs to the dGTPase family. Type 2 subfamily.

The polypeptide is Deoxyguanosinetriphosphate triphosphohydrolase-like protein (Vibrio parahaemolyticus serotype O3:K6 (strain RIMD 2210633)).